The sequence spans 401 residues: Argininosuccinate synthase (401 aa).

Residues 10-18 (AYSGGVDTS) and alanine 38 contribute to the ATP site. Tyrosine 89 lines the L-citrulline pocket. Glycine 119 contributes to the ATP binding site. Residues threonine 121, asparagine 125, and aspartate 126 each coordinate L-aspartate. Asparagine 125 contributes to the L-citrulline binding site. Arginine 129, serine 177, serine 186, glutamate 262, and tyrosine 274 together coordinate L-citrulline.

This sequence belongs to the argininosuccinate synthase family. Type 1 subfamily. As to quaternary structure, homotetramer.

The protein localises to the cytoplasm. The enzyme catalyses L-citrulline + L-aspartate + ATP = 2-(N(omega)-L-arginino)succinate + AMP + diphosphate + H(+). Its pathway is amino-acid biosynthesis; L-arginine biosynthesis; L-arginine from L-ornithine and carbamoyl phosphate: step 2/3. This Synechococcus sp. (strain CC9311) protein is Argininosuccinate synthase.